The primary structure comprises 506 residues: D-alanine--D-alanyl carrier protein ligase (506 aa).

152 to 153 (TS) contacts ATP. D197 lines the D-alanine pocket. 292-297 (NTYGPT) is an ATP binding site. V301 lines the D-alanine pocket. ATP contacts are provided by residues D383, 395–398 (YRGR), and K494. K494 lines the D-alanine pocket.

The protein belongs to the ATP-dependent AMP-binding enzyme family. DltA subfamily.

It is found in the cytoplasm. The catalysed reaction is holo-[D-alanyl-carrier protein] + D-alanine + ATP = D-alanyl-[D-alanyl-carrier protein] + AMP + diphosphate. It functions in the pathway cell wall biogenesis; lipoteichoic acid biosynthesis. Its function is as follows. Catalyzes the first step in the D-alanylation of lipoteichoic acid (LTA), the activation of D-alanine and its transfer onto the D-alanyl carrier protein (Dcp) DltC. In an ATP-dependent two-step reaction, forms a high energy D-alanyl-AMP intermediate, followed by transfer of the D-alanyl residue as a thiol ester to the phosphopantheinyl prosthetic group of the Dcp. D-alanylation of LTA plays an important role in modulating the properties of the cell wall in Gram-positive bacteria, influencing the net charge of the cell wall. The sequence is that of D-alanine--D-alanyl carrier protein ligase from Lacticaseibacillus rhamnosus (Lactobacillus rhamnosus).